Reading from the N-terminus, the 237-residue chain is Phosphoribosylaminoimidazole-succinocarboxamide synthase (237 aa).

The protein belongs to the SAICAR synthetase family.

It catalyses the reaction 5-amino-1-(5-phospho-D-ribosyl)imidazole-4-carboxylate + L-aspartate + ATP = (2S)-2-[5-amino-1-(5-phospho-beta-D-ribosyl)imidazole-4-carboxamido]succinate + ADP + phosphate + 2 H(+). It participates in purine metabolism; IMP biosynthesis via de novo pathway; 5-amino-1-(5-phospho-D-ribosyl)imidazole-4-carboxamide from 5-amino-1-(5-phospho-D-ribosyl)imidazole-4-carboxylate: step 1/2. This Deinococcus deserti (strain DSM 17065 / CIP 109153 / LMG 22923 / VCD115) protein is Phosphoribosylaminoimidazole-succinocarboxamide synthase.